A 129-amino-acid polypeptide reads, in one-letter code: uncharacterized protein (129 aa).

Over 1–28 (MAGTLFIILRFVDTTLPSSRVYCVRSLE) the chain is Cytoplasmic. The helical transmembrane segment at 29–49 (VSVAVELAAATVLAFESIGVV) threads the bilayer. Topologically, residues 50–54 (DDCGR) are extracellular. A helical membrane pass occupies residues 55-75 (SVLFSIILIAAFICSVFLIAS). The Cytoplasmic segment spans residues 76–129 (EDIAGSRRSTGSCVTLWEGRNISFCLYRSNWLNTVPVGYMFFLRKNRSLDERYF).

The protein localises to the membrane. This is an uncharacterized protein from Saccharomyces cerevisiae (strain ATCC 204508 / S288c) (Baker's yeast).